The primary structure comprises 284 residues: Nucleotide-binding protein Shewmr4_0670 (284 aa).

Residue 8-15 coordinates ATP; that stretch reads GRSGSGKS. Residue 56 to 59 participates in GTP binding; it reads DVRN.

The protein belongs to the RapZ-like family.

Functionally, displays ATPase and GTPase activities. This Shewanella sp. (strain MR-4) protein is Nucleotide-binding protein Shewmr4_0670.